The following is a 507-amino-acid chain: Archaeal-type glutamate synthase [NADPH] (507 aa).

4Fe-4S ferredoxin-type domains are found at residues 10–39 (FVVE…YDEN) and 41–70 (NRVY…VRRN). [4Fe-4S] cluster contacts are provided by C19, C22, C25, C29, C50, C53, C56, and C60.

It belongs to the glutamate synthase family. FMN serves as cofactor.

It catalyses the reaction 2 L-glutamate + NADP(+) = L-glutamine + 2-oxoglutarate + NADPH + H(+). The sequence is that of Archaeal-type glutamate synthase [NADPH] from Thermotoga neapolitana (strain ATCC 49049 / DSM 4359 / NBRC 107923 / NS-E).